Here is a 523-residue protein sequence, read N- to C-terminus: Non-specific phospholipase C3 (523 aa).

Positions 44–64 (DGVSESEPRSNPLSTSDPNSA) are disordered. Positions 52–64 (RSNPLSTSDPNSA) are enriched in polar residues.

Belongs to the bacterial phospholipase C family. In terms of tissue distribution, expressed in root tips, cotyledons, on leaf margins, stems, young anthers and funiculus.

The catalysed reaction is a 1-acyl-sn-glycero-3-phosphate + H2O = a 1-acyl-sn-glycerol + phosphate. Functionally, possesses specific phosphatase activity toward lysophosphatidic acid (LPA) in vitro. Does not show phospholipase C activity. May play a role in signal transduction and storage lipid synthesis. May be involved in brassinolide-mediated signaling in root development. The sequence is that of Non-specific phospholipase C3 (NPC3) from Arabidopsis thaliana (Mouse-ear cress).